The following is a 521-amino-acid chain: Vang-like protein 2 (521 aa).

Residues Met1 to His81 are disordered. At Met1–Gly108 the chain is on the cytoplasmic side. The span at Gly15 to Lys33 shows a compositional bias: basic residues. Residues Glu57 to Asn67 show a composition bias toward basic and acidic residues. Over residues Gly69–His81 the composition is skewed to low complexity. The chain crosses the membrane as a helical span at residues Val109–Leu129. The Extracellular portion of the chain corresponds to Pro130–Gly147. The chain crosses the membrane as a helical span at residues Leu148–Phe168. Over Arg169–Val178 the chain is Cytoplasmic. A helical transmembrane segment spans residues Phe179 to Phe199. Topologically, residues Tyr200–Tyr218 are extracellular. A helical transmembrane segment spans residues Ala219 to Leu239. At Arg240–Val521 the chain is on the cytoplasmic side. Residues Glu518 to Val521 carry the PDZ-binding motif.

The protein belongs to the Vang family. In terms of assembly, interacts with dvl/dsh. Interacts with prickle3.

The protein localises to the cell membrane. Has a role in non-canonical Wnt/planar cell polarity (PCP) signaling; can recruit dvl/dsh and prickle from the cytoplasm to the plasma membrane. Acts in a PCP complex to regulate the polarized assembly of fibronectrin on the surface of the mesoderm during gastrulation. Regulates convergent extension in both dorsal mesoderm and neural tissue without affecting cell fate. Regulates neural fold closure during neurulation. May be required for cell surface localization of fzd3 and fzd6 in the inner ear. The chain is Vang-like protein 2 from Xenopus tropicalis (Western clawed frog).